Reading from the N-terminus, the 495-residue chain is Lysine--tRNA ligase (495 aa).

Residues glutamate 406 and glutamate 413 each contribute to the Mg(2+) site.

It belongs to the class-II aminoacyl-tRNA synthetase family. Homodimer. It depends on Mg(2+) as a cofactor.

The protein resides in the cytoplasm. The catalysed reaction is tRNA(Lys) + L-lysine + ATP = L-lysyl-tRNA(Lys) + AMP + diphosphate. This is Lysine--tRNA ligase from Staphylococcus aureus (strain COL).